Consider the following 194-residue polypeptide: tRNA (mnm(5)s(2)U34)-methyltransferase (194 aa).

Residues H33, D34, D52, Q54, S79, and H80 each coordinate S-adenosyl-L-methionine.

This sequence belongs to the methyltransferase superfamily. MnmM family. As to quaternary structure, homodimer.

The enzyme catalyses 5-aminomethyl-2-thiouridine(34) in tRNA + S-adenosyl-L-methionine = 5-methylaminomethyl-2-thiouridine(34) in tRNA + S-adenosyl-L-homocysteine + H(+). The protein operates within tRNA modification. Involved in the biosynthesis of 5-methylaminomethyl-2-thiouridine (mnm(5)s(2)U) at the wobble position (U34) in tRNA. Catalyzes the transfer of a methyl group from S-adenosyl-L-methionine to nm(5)s(2)U34 to form mnm(5)s(2)U34. The protein is tRNA (mnm(5)s(2)U34)-methyltransferase of Bacillus subtilis (strain 168).